Here is a 353-residue protein sequence, read N- to C-terminus: MNRREIAINKLKSLGDVILDDVTQGRIPRIKVPSRGTSNIIYDEDKRHYVLGDRYGTRSMGNVKQIKKIGQMLYTANFCKDLVAREKTATLRELYYISEGWEVDFADQQESNIVGEDLEVTLGMTREELGLMPEEDGASVYGALTVREGDIEIDALRSGKSGYNISPTIDEVEFVDHDVERVIAVETMGMFHRLVQEKAYKKFDALIVGLKGQAARATRRFIKRVNEELNLPVYICNDGDPWGFHIAMVIISGSAKLAHVNHQLATPDAKFLGVTASDIINYDLPTDPLKDVDVVRLKELLQDPRYRGDFWKTEIKKMLTIGKKAEQQSFSKYGLEYVVDTYLPEKLEAVENQ.

The 137-residue stretch at 2 to 138 (NRREIAINKL…LGLMPEEDGA (137 aa)) folds into the Topo IIA-type catalytic domain. The active-site O-(5'-phospho-DNA)-tyrosine intermediate is the tyrosine 96. Mg(2+)-binding residues include glutamate 186 and aspartate 238.

Belongs to the TOP6A family. Homodimer. Heterotetramer of two Top6A and two Top6B chains. Mg(2+) serves as cofactor.

The enzyme catalyses ATP-dependent breakage, passage and rejoining of double-stranded DNA.. Relaxes both positive and negative superturns and exhibits a strong decatenase activity. In Methanothermobacter thermautotrophicus (strain ATCC 29096 / DSM 1053 / JCM 10044 / NBRC 100330 / Delta H) (Methanobacterium thermoautotrophicum), this protein is Type 2 DNA topoisomerase 6 subunit A.